The primary structure comprises 373 residues: Histidinol-phosphate aminotransferase (373 aa).

Lys-231 carries the N6-(pyridoxal phosphate)lysine modification.

The protein belongs to the class-II pyridoxal-phosphate-dependent aminotransferase family. Histidinol-phosphate aminotransferase subfamily. Pyridoxal 5'-phosphate is required as a cofactor.

The catalysed reaction is L-histidinol phosphate + 2-oxoglutarate = 3-(imidazol-4-yl)-2-oxopropyl phosphate + L-glutamate. It participates in amino-acid biosynthesis; L-histidine biosynthesis; L-histidine from 5-phospho-alpha-D-ribose 1-diphosphate: step 7/9. This Methanocaldococcus jannaschii (strain ATCC 43067 / DSM 2661 / JAL-1 / JCM 10045 / NBRC 100440) (Methanococcus jannaschii) protein is Histidinol-phosphate aminotransferase (hisC).